The sequence spans 79 residues: Sulfur carrier protein TusA (79 aa).

The Cysteine persulfide intermediate role is filled by Cys17.

This sequence belongs to the sulfur carrier protein TusA family.

The protein localises to the cytoplasm. In terms of biological role, sulfur carrier protein which probably makes part of a sulfur-relay system. This Pasteurella multocida (strain Pm70) protein is Sulfur carrier protein TusA.